A 239-amino-acid polypeptide reads, in one-letter code: Prolyl hydroxylase EGLN3 (239 aa).

Residues 62 to 73 (AGPRAGVSKRHL) are beta(2)beta(3) 'finger-like' loop. The tract at residues 88–104 (CEAINFLLSLIDRLVLY) is required for interaction with ADRB2. The 99-residue stretch at 116 to 214 (ERSKAMVACY…RYAMTVWYFD (99 aa)) folds into the Fe2OG dioxygenase domain. Positions 135, 137, and 196 each coordinate Fe cation. 2-oxoglutarate is bound at residue arginine 205.

Interacts with ADRB2; the interaction hydroxylates ADRB2 facilitating its ubiquitination by the VHL-E3 ligase complex. Interacts with PAX2; the interaction targets PAX2 for destruction. Interacts with PKM; the interaction hydroxylates PKM in hypoxia. Interacts with WDR83; the interaction leads to almost complete elimination of HIF-mediated reporter activity. Interacts with BCL2 (via its BH4 domain); the interaction disrupts the BAX-BCL4 complex inhibiting the anti-apoptotic activity of BCL2. It depends on Fe(2+) as a cofactor. L-ascorbate is required as a cofactor. In terms of processing, ubiquitinated by SIAH1 and/or SIAH2 in response to the unfolded protein response (UPR), leading to its degradation. In terms of tissue distribution, highly expressed in vascular smooth muscle. Moderately expressed in esophagus, stomach, small bowel and aorta. Low levels in tail and kidney. Expression also in pheochromocytoma cell line PC-12.

It is found in the nucleus. The protein resides in the cytoplasm. The catalysed reaction is L-prolyl-[protein] + 2-oxoglutarate + O2 = trans-4-hydroxy-L-prolyl-[protein] + succinate + CO2. The enzyme catalyses L-prolyl-[hypoxia-inducible factor alpha subunit] + 2-oxoglutarate + O2 = trans-4-hydroxy-L-prolyl-[hypoxia-inducible factor alpha subunit] + succinate + CO2. Prolyl hydroxylase that mediates hydroxylation of proline residues in target proteins, such as PKM, TELO2, ATF4 and HIF1A. Target proteins are preferentially recognized via a LXXLAP motif. Cellular oxygen sensor that catalyzes, under normoxic conditions, the post-translational formation of 4-hydroxyproline in hypoxia-inducible factor (HIF) alpha proteins. Hydroxylates a specific proline found in each of the oxygen-dependent degradation (ODD) domains (N-terminal, NODD, and C-terminal, CODD) of HIF1A. Also hydroxylates HIF2A. Has a preference for the CODD site for both HIF1A and HIF2A. Hydroxylation on the NODD site by EGLN3 appears to require prior hydroxylation on the CODD site. Hydroxylated HIFs are then targeted for proteasomal degradation via the von Hippel-Lindau ubiquitination complex. Under hypoxic conditions, the hydroxylation reaction is attenuated allowing HIFs to escape degradation resulting in their translocation to the nucleus, heterodimerization with HIF1B, and increased expression of hypoxy-inducible genes. ELGN3 is the most important isozyme in limiting physiological activation of HIFs (particularly HIF2A) in hypoxia. Also hydroxylates PKM in hypoxia, limiting glycolysis. Under normoxia, hydroxylates and regulates the stability of ADRB2. Regulator of cardiomyocyte and neuronal apoptosis. In cardiomyocytes, inhibits the anti-apoptotic effect of BCL2 by disrupting the BAX-BCL2 complex. In neurons, has a NGF-induced proapoptotic effect, probably through regulating CASP3 activity. Also essential for hypoxic regulation of neutrophilic inflammation. Plays a crucial role in DNA damage response (DDR) by hydroxylating TELO2, promoting its interaction with ATR which is required for activation of the ATR/CHK1/p53 pathway. Also mediates hydroxylation of ATF4, leading to decreased protein stability of ATF4. This Rattus norvegicus (Rat) protein is Prolyl hydroxylase EGLN3 (Egln3).